A 536-amino-acid chain; its full sequence is CTP synthase (536 aa).

The segment at 1-266 is amidoligase domain; that stretch reads MKTKFIFVTG…DEQVVEKLNI (266 aa). A CTP-binding site is contributed by S14. S14 serves as a coordination point for UTP. ATP-binding positions include 15-20 and D72; that span reads SIGKGL. D72 and E140 together coordinate Mg(2+). Residues 147-149, 187-192, and K223 contribute to the CTP site; these read DIE and KTKPTQ. UTP is bound by residues 187 to 192 and K223; that span reads KTKPTQ. One can recognise a Glutamine amidotransferase type-1 domain in the interval 292-534; that stretch reads RIAIVGKYVN…IAAALDRKDK (243 aa). G354 lines the L-glutamine pocket. The active-site Nucleophile; for glutamine hydrolysis is C381. L-glutamine is bound by residues 382 to 385, E405, and R462; that span reads LGMQ. Active-site residues include H507 and E509.

Belongs to the CTP synthase family. In terms of assembly, homotetramer.

It catalyses the reaction UTP + L-glutamine + ATP + H2O = CTP + L-glutamate + ADP + phosphate + 2 H(+). It carries out the reaction L-glutamine + H2O = L-glutamate + NH4(+). The enzyme catalyses UTP + NH4(+) + ATP = CTP + ADP + phosphate + 2 H(+). It participates in pyrimidine metabolism; CTP biosynthesis via de novo pathway; CTP from UDP: step 2/2. With respect to regulation, allosterically activated by GTP, when glutamine is the substrate; GTP has no effect on the reaction when ammonia is the substrate. The allosteric effector GTP functions by stabilizing the protein conformation that binds the tetrahedral intermediate(s) formed during glutamine hydrolysis. Inhibited by the product CTP, via allosteric rather than competitive inhibition. Its function is as follows. Catalyzes the ATP-dependent amination of UTP to CTP with either L-glutamine or ammonia as the source of nitrogen. Regulates intracellular CTP levels through interactions with the four ribonucleotide triphosphates. This chain is CTP synthase, found in Geobacter sulfurreducens (strain ATCC 51573 / DSM 12127 / PCA).